The following is a 283-amino-acid chain: Homeobox protein six1a (283 aa).

The homeobox DNA-binding region spans 124–183; that stretch reads GEETSYCFKEKSRSVLREWYTHNPYPSPREKRELAEATGLTTTQVSNWFKNRRQRDRAAE. A disordered region spans residues 168 to 264; that stretch reads VSNWFKNRRQ…PLHGMQGHPH (97 aa). The segment covering 179 to 190 has biased composition (basic and acidic residues); it reads DRAAEAKERENG. Residues 237 to 248 show a composition bias toward low complexity; that stretch reads MNNPAAPAYPMP.

The protein belongs to the SIX/Sine oculis homeobox family.

The protein resides in the nucleus. The protein localises to the cytoplasm. Functionally, transcription factor that is involved in the regulation of cell proliferation, apoptosis and embryonic development. Depending on context, functions as a transcriptional repressor or activator. Plays an important role in the development of the inner ear, where it promotes hair cell proliferation and inhibits proliferation of neural progenitor cells. Required for normal myogenesis. Plays a role in the development of fast muscle fibers throughout the body, as well as the development of craniofacial muscles. This chain is Homeobox protein six1a (six1a), found in Danio rerio (Zebrafish).